Consider the following 944-residue polypeptide: 2-oxoglutarate dehydrogenase E1 component (944 aa).

The interval 918-944 (SSTAEGDPTVHKKEQERIVSDSLTRKN) is disordered. A compositionally biased stretch (basic and acidic residues) spans 925-936 (PTVHKKEQERIV).

It belongs to the alpha-ketoglutarate dehydrogenase family. In terms of assembly, homodimer. Part of the 2-oxoglutarate dehydrogenase (OGDH) complex composed of E1 (2-oxoglutarate dehydrogenase), E2 (dihydrolipoamide succinyltransferase) and E3 (dihydrolipoamide dehydrogenase); the complex contains multiple copies of the three enzymatic components (E1, E2 and E3). Requires thiamine diphosphate as cofactor.

The catalysed reaction is N(6)-[(R)-lipoyl]-L-lysyl-[protein] + 2-oxoglutarate + H(+) = N(6)-[(R)-S(8)-succinyldihydrolipoyl]-L-lysyl-[protein] + CO2. Functionally, E1 component of the 2-oxoglutarate dehydrogenase (OGDH) complex which catalyzes the decarboxylation of 2-oxoglutarate, the first step in the conversion of 2-oxoglutarate to succinyl-CoA and CO(2). The protein is 2-oxoglutarate dehydrogenase E1 component of Bacillus pumilus (strain SAFR-032).